We begin with the raw amino-acid sequence, 260 residues long: Kallikrein-8 (260 aa).

Positions 1–28 (MGRPPPCAIQTWILLFLLMGAWAGLTRA) are cleaved as a signal peptide. A propeptide spanning residues 29–32 (QGSK) is cleaved from the precursor. The 225-residue stretch at 33–257 (ILEGQECKPH…YTNWIKKTMG (225 aa)) folds into the Peptidase S1 domain. 6 disulfides stabilise this stretch: Cys39-Cys173, Cys58-Cys74, Cys145-Cys246, Cys152-Cys218, Cys184-Cys198, and Cys208-Cys233. His73 acts as the Charge relay system in catalysis. N-linked (GlcNAc...) asparagine glycosylation occurs at Asn110. Residue Asp120 is the Charge relay system of the active site. Ser212 serves as the catalytic Charge relay system.

Belongs to the peptidase S1 family. Kallikrein subfamily. In terms of assembly, interacts with SPINK9. Restricted to hippocampus.

The protein resides in the secreted. The protein localises to the cytoplasm. The enzyme catalyses Cleavage of amide substrates following the basic amino acids Arg or Lys at the P1 position, with a preference for Arg over Lys.. Functionally, serine protease which is capable of degrading a number of proteins such as casein, fibrinogen, kininogen, fibronectin and collagen type IV. Also cleaves L1CAM in response to increased neural activity. Induces neurite outgrowth and fasciculation of cultured hippocampal neurons. Plays a role in the formation and maturation of orphan and small synaptic boutons in the Schaffer-collateral pathway, regulates Schaffer-collateral long-term potentiation in the hippocampus and is required for memory acquisition and synaptic plasticity. Involved in skin desquamation and keratinocyte proliferation. Plays a role in the secondary phase of pathogenesis following spinal cord injury. In Rattus norvegicus (Rat), this protein is Kallikrein-8 (Klk8).